Here is a 371-residue protein sequence, read N- to C-terminus: Probable RNA 3'-terminal phosphate cyclase-like protein (371 aa).

The protein belongs to the RNA 3'-terminal cyclase family. Type 2 subfamily. In terms of assembly, part of the small subunit (SSU) processome, composed of more than 70 proteins and the RNA chaperone small nucleolar RNA (snoRNA) U3.

It localises to the nucleus. The protein localises to the nucleolus. In terms of biological role, part of the small subunit (SSU) processome, first precursor of the small eukaryotic ribosomal subunit. During the assembly of the SSU processome in the nucleolus, many ribosome biogenesis factors, an RNA chaperone and ribosomal proteins associate with the nascent pre-rRNA and work in concert to generate RNA folding, modifications, rearrangements and cleavage as well as targeted degradation of pre-ribosomal RNA by the RNA exosome. Does not have cyclase activity. The polypeptide is Probable RNA 3'-terminal phosphate cyclase-like protein (rcl1) (Dictyostelium discoideum (Social amoeba)).